Consider the following 147-residue polypeptide: Large ribosomal subunit protein mL40 (147 aa).

Residues M1–N26 constitute a mitochondrion transit peptide.

This sequence belongs to the mitochondrion-specific ribosomal protein mL40 family. Component of the mitochondrial large ribosomal subunit (mt-LSU). Mature yeast 74S mitochondrial ribosomes consist of a small (37S) and a large (54S) subunit. The 37S small subunit contains a 15S ribosomal RNA (15S mt-rRNA) and 34 different proteins. The 54S large subunit contains a 21S rRNA (21S mt-rRNA) and 46 different proteins.

Its subcellular location is the mitochondrion. Functionally, component of the mitochondrial ribosome (mitoribosome), a dedicated translation machinery responsible for the synthesis of mitochondrial genome-encoded proteins, including at least some of the essential transmembrane subunits of the mitochondrial respiratory chain. The mitoribosomes are attached to the mitochondrial inner membrane and translation products are cotranslationally integrated into the membrane. This chain is Large ribosomal subunit protein mL40 (MRPL28), found in Saccharomyces cerevisiae (strain ATCC 204508 / S288c) (Baker's yeast).